The chain runs to 198 residues: Ribonuclease HII (198 aa).

The RNase H type-2 domain maps to 10-198; that stretch reads QLVAGVDEVG…PVKRALGLAS (189 aa). Residues Asp-16, Glu-17, and Asp-108 each contribute to the a divalent metal cation site.

Belongs to the RNase HII family. Requires Mn(2+) as cofactor. It depends on Mg(2+) as a cofactor.

The protein localises to the cytoplasm. The catalysed reaction is Endonucleolytic cleavage to 5'-phosphomonoester.. In terms of biological role, endonuclease that specifically degrades the RNA of RNA-DNA hybrids. The chain is Ribonuclease HII from Escherichia coli O81 (strain ED1a).